We begin with the raw amino-acid sequence, 779 residues long: Pleckstrin homology domain-containing family A member 4 (779 aa).

Positions 54 to 153 constitute a PH domain; sequence PVHIRGWLHK…WLRALGKASR (100 aa). Disordered regions lie at residues 152 to 355, 495 to 669, and 694 to 766; these read SRAE…LPGP, AGLG…SGGH, and SPER…QEEG. Serine 164 is subject to Phosphoserine. A compositionally biased stretch (basic and acidic residues) spans 183 to 193; sequence VNRREEGRTSE. Composition is skewed to low complexity over residues 246-259 and 324-334; these read PRPRSAPVRRPPLS and QSTQVSSGSST. A compositionally biased stretch (basic and acidic residues) spans 517 to 527; it reads QREESSERESL. Over residues 528–540 the composition is skewed to low complexity; it reads SESLELSSPQSPE. Serine 562 carries the phosphoserine modification. Polar residues predominate over residues 567-580; that stretch reads RASSPECRQQSSPL. 2 stretches are compositionally biased toward low complexity: residues 608–627 and 649–659; these read GLSLPRPTSPRLLTLGRTLS and SSGSWSSPRHS. Over residues 720-740 the composition is skewed to polar residues; the sequence is VTSSPTSHKANSATTGFSCQG.

It is found in the cytoplasm. Its subcellular location is the membrane. Binds specifically to phosphatidylinositol 3-phosphate (PtdIns3P), but not to other phosphoinositides. This chain is Pleckstrin homology domain-containing family A member 4 (Plekha4), found in Rattus norvegicus (Rat).